The chain runs to 597 residues: Aspartate--tRNA(Asp/Asn) ligase (597 aa).

Residue Glu-176 coordinates L-aspartate. The aspartate stretch occupies residues 200–203; the sequence is QQFK. The L-aspartate site is built by Arg-222 and His-451. ATP is bound at residue 222-224; sequence RDE. Residue Glu-489 participates in ATP binding. Position 496 (Arg-496) interacts with L-aspartate. ATP is bound at residue 541–544; sequence GIDR.

Belongs to the class-II aminoacyl-tRNA synthetase family. Type 1 subfamily. Homodimer.

Its subcellular location is the cytoplasm. It carries out the reaction tRNA(Asx) + L-aspartate + ATP = L-aspartyl-tRNA(Asx) + AMP + diphosphate. In terms of biological role, aspartyl-tRNA synthetase with relaxed tRNA specificity since it is able to aspartylate not only its cognate tRNA(Asp) but also tRNA(Asn). Reaction proceeds in two steps: L-aspartate is first activated by ATP to form Asp-AMP and then transferred to the acceptor end of tRNA(Asp/Asn). This is Aspartate--tRNA(Asp/Asn) ligase from Orientia tsutsugamushi (strain Boryong) (Rickettsia tsutsugamushi).